We begin with the raw amino-acid sequence, 95 residues long: Aspartyl/glutamyl-tRNA(Asn/Gln) amidotransferase subunit C (95 aa).

Belongs to the GatC family. In terms of assembly, heterotrimer of A, B and C subunits.

It catalyses the reaction L-glutamyl-tRNA(Gln) + L-glutamine + ATP + H2O = L-glutaminyl-tRNA(Gln) + L-glutamate + ADP + phosphate + H(+). The enzyme catalyses L-aspartyl-tRNA(Asn) + L-glutamine + ATP + H2O = L-asparaginyl-tRNA(Asn) + L-glutamate + ADP + phosphate + 2 H(+). Functionally, allows the formation of correctly charged Asn-tRNA(Asn) or Gln-tRNA(Gln) through the transamidation of misacylated Asp-tRNA(Asn) or Glu-tRNA(Gln) in organisms which lack either or both of asparaginyl-tRNA or glutaminyl-tRNA synthetases. The reaction takes place in the presence of glutamine and ATP through an activated phospho-Asp-tRNA(Asn) or phospho-Glu-tRNA(Gln). In Dinoroseobacter shibae (strain DSM 16493 / NCIMB 14021 / DFL 12), this protein is Aspartyl/glutamyl-tRNA(Asn/Gln) amidotransferase subunit C.